The sequence spans 495 residues: L-arabinose isomerase (495 aa).

Residues glutamate 305, glutamate 332, histidine 349, and histidine 448 each contribute to the Mn(2+) site.

The protein belongs to the arabinose isomerase family. Requires Mn(2+) as cofactor.

It catalyses the reaction beta-L-arabinopyranose = L-ribulose. The protein operates within carbohydrate degradation; L-arabinose degradation via L-ribulose; D-xylulose 5-phosphate from L-arabinose (bacterial route): step 1/3. Its function is as follows. Catalyzes the conversion of L-arabinose to L-ribulose. In Mannheimia succiniciproducens (strain KCTC 0769BP / MBEL55E), this protein is L-arabinose isomerase.